We begin with the raw amino-acid sequence, 308 residues long: Palmitoyltransferase ZDHHC7 (308 aa).

Residues 1–50 (MQPSGHRLRDIEHHPLLTDNDNYDSASSSSSETDMADRVWFIRDGCGMVC) lie on the Cytoplasmic side of the membrane. Residues 51-71 (AVMTWLLVVYADFVVTFVMLL) traverse the membrane as a helical segment. Residues 72-75 (PSKD) lie on the Lumenal side of the membrane. Residues 76–96 (FWYSVVNGVLFNCLAVLALSS) form a helical membrane-spanning segment. At 97–173 (HLRTMLTDPG…NNCVGEKNQR (77 aa)) the chain is on the cytoplasmic side. Residues 130–180 (YKCPKCCCIKPERAHHCSICKRCIRKMDHHCPWVNNCVGEKNQRFFVLFTM) enclose the DHHC domain. Cysteine 160 serves as the catalytic S-palmitoyl cysteine intermediate. Residues 174 to 194 (FFVLFTMYIALSSVHALILCG) form a helical membrane-spanning segment. Residues 195–217 (LQFISCVRGQWTECSDFSPPITV) lie on the Lumenal side of the membrane. A helical membrane pass occupies residues 218–238 (ILLVFLCLEGLLFFTFTAVMF). Residues 239–308 (GTQIHSICND…TRKGGPEFSV (70 aa)) are Cytoplasmic-facing.

The protein belongs to the DHHC palmitoyltransferase family. Homooligomers. Heterooligomers with ZDHHC3. Post-translationally, autopalmitoylated. In terms of tissue distribution, ubiquitously expressed, with highest levels in liver, kidney and brain. Expressed in all brain regions.

It localises to the golgi apparatus membrane. The enzyme catalyses L-cysteinyl-[protein] + hexadecanoyl-CoA = S-hexadecanoyl-L-cysteinyl-[protein] + CoA. The catalysed reaction is L-cysteinyl-[protein] + tetradecanoyl-CoA = S-tetradecanoyl-L-cysteinyl-[protein] + CoA. It carries out the reaction L-cysteinyl-[protein] + octadecanoyl-CoA = S-octadecanoyl-L-cysteinyl-[protein] + CoA. Functionally, golgi-localized palmitoyltransferase that catalyzes the addition of palmitate onto various protein substrates and therefore functions in several unrelated biological processes. Has no stringent fatty acid selectivity and in addition to palmitate can also transfer onto target proteins myristate from tetradecanoyl-CoA and stearate from octadecanoyl-CoA. Palmitoylates sex steroid hormone receptors, including ESR1, PGR and AR, thereby regulating their targeting to the plasma membrane and their function in rapid intracellular signaling upon binding of sex hormones. Palmitoylates GNAQ, a heterotrimeric G protein, regulating its dynamic localization at the plasma membrane and is thereby involved in GNAQ-dependent G protein-coupled receptor signaling pathways. Also functions in ligand-induced cell death by regulating the FAS signaling pathway through the palmitoylation and stabilization of the receptor at the plasma membrane. In epithelial cells, palmitoylates SCRIB and regulates its localization to the plasma membrane, regulating indirectly cell polarity and differentiation. Also palmitoylates JAM3 and promotes its expression at tight junctions and regulates its function in cell migration. Palmitoylates the glucose transporter GLUT4/SLC2A4 and controls the insulin-dependent translocation of GLUT4 to the plasma membrane. In brain, could also palmitoylate SNAP25 and DLG4/PSD95. Could also palmitoylate DNAJC5 and regulate its localization to the Golgi membrane. Could also palmitoylate NCDN. May play a role in follicle stimulation hormone (FSH) activation of testicular Sertoli cells. Activates pyroptosis by catalyzing palmitoylation of gasdermin-D (GSDMD). This is Palmitoyltransferase ZDHHC7 from Mus musculus (Mouse).